Reading from the N-terminus, the 396-residue chain is Sialyltransferase-like protein 2 (396 aa).

The Cytoplasmic portion of the chain corresponds to 1 to 6; the sequence is MKRRHL. The helical; Signal-anchor for type II membrane protein transmembrane segment at 7 to 23 threads the bilayer; the sequence is PPVLVLLLLSILSLSFR. Residues 24-396 lie on the Lumenal side of the membrane; the sequence is RRLLVLQGPP…FTVPPVRLHR (373 aa). Asn-72, Asn-260, and Asn-304 each carry an N-linked (GlcNAc...) asparagine glycan.

Belongs to the glycosyltransferase 29 family.

Its subcellular location is the golgi apparatus membrane. Does not possess sialyltransferase-like activity in vitro. The polypeptide is Sialyltransferase-like protein 2 (Oryza sativa subsp. indica (Rice)).